Consider the following 626-residue polypeptide: MKAQSEPRFDYVKIAIASPERIRQWGERTLPNGTVVGEVTKPETINYRTLKPEMDGLFCEKIFGPSKDWECWCGKYKRVRHRGIVCERCGVEVTESRVRRHRMGYIKLAAPVTHVWYLKGIPSYLSILLDMALRDVEQIVYFNAYVVLNPGNASNLQYKQLLTEDQWVEIEDQIYAEDSELEGIEVGIGAEAVQRLLAELQLEEVAEKLREEILASKGQKRAKLIKRLRVIDNFIATHSQAEWMTLDVIPVIPPDLRPMVQLDGGRFATSDLNDLYRRVINRNNRLARLQEILAPEIIVRNEKRMLQEAVDALIDNGRRGRTVVGANNRALKSLSDIIEGKQGRFRQNLLGKRVDYSGRSVIVVGPNLKIYQCGLPREMAIELFQPFVIHRLIKLGIVNNIKAAKKLILKGDPQIWSVLEEVITGHPVMLNRAPTLHRLGIQAFEPILVEGRAIQLHPLVCPAFNADFDGDQMAVHVPLSLEAQCEARLLMLACHNVLSPATGKPIVAPSQDMVLGCYYLTAENPNAQKGAGRYFAGIEDALRAYDHGQVDLHSQIWIRHLDEDVVTEKPDTEVIKTEDLGDGTVMKYYRERKIREGVDGEIITQYIQTTPGRIIYNKTIAEALVF.

Zn(2+)-binding residues include Cys71, Cys73, Cys86, and Cys89. Mg(2+) is bound by residues Asp467, Asp469, and Asp471.

The protein belongs to the RNA polymerase beta' chain family. RpoC1 subfamily. In cyanobacteria the RNAP catalytic core is composed of 2 alpha, 1 beta, 1 beta', 1 gamma and 1 omega subunit. When a sigma factor is associated with the core the holoenzyme is formed, which can initiate transcription. Requires Mg(2+) as cofactor. Zn(2+) serves as cofactor.

It catalyses the reaction RNA(n) + a ribonucleoside 5'-triphosphate = RNA(n+1) + diphosphate. In terms of biological role, DNA-dependent RNA polymerase catalyzes the transcription of DNA into RNA using the four ribonucleoside triphosphates as substrates. The protein is DNA-directed RNA polymerase subunit gamma of Synechocystis sp. (strain ATCC 27184 / PCC 6803 / Kazusa).